The sequence spans 325 residues: Secreted RxLR effector protein RXLR-C07 (325 aa).

A signal peptide spans 1–19 (MQGVRITILWCIVLATIYA). TPR repeat units follow at residues 37-75 (RGLRNAGMKANDERMFKDAIEKLRHAISLLHNRVFGEER), 92-125 (AQILNDYGSVLIRTKQYDEAIEVLEDSVAMIEKI), 134-167 (GLSLRSLADAYMEKKAFKSAIKRYKTLRKHVKKG), 218-251 (AELYMELSSAHVEVGEIDDALRAAETASAIFLQR), and 260-293 (AFSLNALAGVKMQQKKVDEAIDLLDRAHNIAVSI). Positions 37–75 (RGLRNAGMKANDERMFKDAIEKLRHAISLLHNRVFGEER) match the RxLR-dEER motif.

Belongs to the RxLR effector family.

The protein resides in the secreted. It localises to the host cytoplasm. The protein localises to the host nucleus. Its subcellular location is the host nucleolus. In terms of biological role, secreted effector that suppresses pattern-triggered immunity (PTI) in plant host. This is Secreted RxLR effector protein RXLR-C07 from Plasmopara halstedii (Downy mildew of sunflower).